A 245-amino-acid polypeptide reads, in one-letter code: 1-(5-phosphoribosyl)-5-[(5-phosphoribosylamino)methylideneamino] imidazole-4-carboxamide isomerase (245 aa).

Residue D7 is the Proton acceptor of the active site. The active-site Proton donor is the D129.

Belongs to the HisA/HisF family.

Its subcellular location is the cytoplasm. The enzyme catalyses 1-(5-phospho-beta-D-ribosyl)-5-[(5-phospho-beta-D-ribosylamino)methylideneamino]imidazole-4-carboxamide = 5-[(5-phospho-1-deoxy-D-ribulos-1-ylimino)methylamino]-1-(5-phospho-beta-D-ribosyl)imidazole-4-carboxamide. The protein operates within amino-acid biosynthesis; L-histidine biosynthesis; L-histidine from 5-phospho-alpha-D-ribose 1-diphosphate: step 4/9. The chain is 1-(5-phosphoribosyl)-5-[(5-phosphoribosylamino)methylideneamino] imidazole-4-carboxamide isomerase from Alteromonas mediterranea (strain DSM 17117 / CIP 110805 / LMG 28347 / Deep ecotype).